The following is a 205-amino-acid chain: Outer-membrane lipoprotein LolB (205 aa).

Residues 1–17 form the signal peptide; sequence MFLRHCITFTLIALLAG. The N-palmitoyl cysteine moiety is linked to residue Cys-18. A lipid anchor (S-diacylglycerol cysteine) is attached at Cys-18.

The protein belongs to the LolB family. As to quaternary structure, monomer.

It localises to the cell outer membrane. In terms of biological role, plays a critical role in the incorporation of lipoproteins in the outer membrane after they are released by the LolA protein. This chain is Outer-membrane lipoprotein LolB, found in Pseudomonas putida (strain ATCC 47054 / DSM 6125 / CFBP 8728 / NCIMB 11950 / KT2440).